The sequence spans 327 residues: L-serine dehydratase/L-threonine deaminase (327 aa).

An N-acetylalanine modification is found at Ala2. Lys41 is modified (N6-(pyridoxal phosphate)lysine). Pro128 lines the pyridoxal 5'-phosphate pocket.

It belongs to the serine/threonine dehydratase family. In terms of assembly, homodimer. It depends on pyridoxal 5'-phosphate as a cofactor.

The protein localises to the cytoplasm. It carries out the reaction L-serine = pyruvate + NH4(+). It catalyses the reaction L-threonine = 2-oxobutanoate + NH4(+). It functions in the pathway carbohydrate biosynthesis; gluconeogenesis. Catalyzes the pyridoxal-phosphate-dependent dehydrative deamination of L-threonine and L-serine to ammonia and alpha-ketobutyrate and pyruvate, respectively. The sequence is that of L-serine dehydratase/L-threonine deaminase (Sds) from Mus musculus (Mouse).